We begin with the raw amino-acid sequence, 297 residues long: N-acetylmuramic acid 6-phosphate etherase (297 aa).

Residues 55 to 218 form the SIS domain; the sequence is AAKRYSKGGR…STGVMIKQGK (164 aa). The active-site Proton donor is Glu-83. Glu-114 is an active-site residue.

Belongs to the GCKR-like family. MurNAc-6-P etherase subfamily. In terms of assembly, homodimer.

It catalyses the reaction N-acetyl-D-muramate 6-phosphate + H2O = N-acetyl-D-glucosamine 6-phosphate + (R)-lactate. It participates in amino-sugar metabolism; N-acetylmuramate degradation. In terms of biological role, specifically catalyzes the cleavage of the D-lactyl ether substituent of MurNAc 6-phosphate, producing GlcNAc 6-phosphate and D-lactate. The protein is N-acetylmuramic acid 6-phosphate etherase of Lactobacillus gasseri (strain ATCC 33323 / DSM 20243 / BCRC 14619 / CIP 102991 / JCM 1131 / KCTC 3163 / NCIMB 11718 / NCTC 13722 / AM63).